A 344-amino-acid chain; its full sequence is L-rhamnose-proton symporter (344 aa).

The next 10 helical transmembrane spans lie at A4 to A24, W38 to L58, F68 to I88, M101 to L121, T137 to L157, L175 to A195, I207 to I227, I259 to G279, M290 to L310, and V321 to G341.

This sequence belongs to the L-rhamnose transporter (TC 2.A.7.6) family.

It is found in the cell inner membrane. The catalysed reaction is L-rhamnopyranose(in) + H(+)(in) = L-rhamnopyranose(out) + H(+)(out). Functionally, uptake of L-rhamnose across the cytoplasmic membrane with the concomitant transport of protons into the cell (symport system). The sequence is that of L-rhamnose-proton symporter from Yersinia pseudotuberculosis serotype O:1b (strain IP 31758).